A 224-amino-acid chain; its full sequence is Urease accessory protein UreF (224 aa).

It belongs to the UreF family. UreD, UreF and UreG form a complex that acts as a GTP-hydrolysis-dependent molecular chaperone, activating the urease apoprotein by helping to assemble the nickel containing metallocenter of UreC. The UreE protein probably delivers the nickel.

It is found in the cytoplasm. In terms of biological role, required for maturation of urease via the functional incorporation of the urease nickel metallocenter. In Enterobacter sp. (strain 638), this protein is Urease accessory protein UreF.